A 328-amino-acid polypeptide reads, in one-letter code: Nuclear transcription factor Y subunit A-8 (328 aa).

Positions lysine 54–arginine 86 are disordered. Residues serine 57–aspartate 75 are compositionally biased toward low complexity. Over residues valine 76–arginine 86 the composition is skewed to polar residues. A Subunit association domain (SAD) motif is present at residues phenylalanine 175–asparagine 198. Residues lysine 205–threonine 230 constitute a DNA-binding region (NFYA/HAP2-type).

This sequence belongs to the NFYA/HAP2 subunit family. As to quaternary structure, heterotrimeric transcription factor composed of three components, NF-YA, NF-YB and NF-YC. NF-YB and NF-YC must interact and dimerize for NF-YA association and DNA binding. As to expression, expressed in the whole plant, except roots.

The protein resides in the nucleus. Stimulates the transcription of various genes by recognizing and binding to a CCAAT motif in promoters. This chain is Nuclear transcription factor Y subunit A-8 (NFYA8), found in Arabidopsis thaliana (Mouse-ear cress).